The chain runs to 89 residues: Small ribosomal subunit protein bS20 (89 aa).

Positions 1-28 (MTLANIKSAKKRAVQSEKSRQHNASQRS) are disordered.

The protein belongs to the bacterial ribosomal protein bS20 family.

Binds directly to 16S ribosomal RNA. The chain is Small ribosomal subunit protein bS20 from Mannheimia succiniciproducens (strain KCTC 0769BP / MBEL55E).